The sequence spans 198 residues: NADH-quinone oxidoreductase subunit I (198 aa).

4Fe-4S ferredoxin-type domains are found at residues 42-72 (LNRW…VEGA) and 88-117 (RVYE…MTND). Cys52, Cys55, Cys58, Cys62, Cys97, Cys100, Cys103, and Cys107 together coordinate [4Fe-4S] cluster. Positions 137 to 198 (APLKEGMEQP…DTQHKDEEAA (62 aa)) are disordered. Residues 182 to 198 (AHRDDDNDTQHKDEEAA) show a composition bias toward basic and acidic residues.

Belongs to the complex I 23 kDa subunit family. NDH-1 is composed of 14 different subunits. Subunits NuoA, H, J, K, L, M, N constitute the membrane sector of the complex. The cofactor is [4Fe-4S] cluster.

The protein localises to the cell membrane. The catalysed reaction is a quinone + NADH + 5 H(+)(in) = a quinol + NAD(+) + 4 H(+)(out). In terms of biological role, NDH-1 shuttles electrons from NADH, via FMN and iron-sulfur (Fe-S) centers, to quinones in the respiratory chain. The immediate electron acceptor for the enzyme in this species is believed to be ubiquinone. Couples the redox reaction to proton translocation (for every two electrons transferred, four hydrogen ions are translocated across the cytoplasmic membrane), and thus conserves the redox energy in a proton gradient. This chain is NADH-quinone oxidoreductase subunit I, found in Cutibacterium acnes (strain DSM 16379 / KPA171202) (Propionibacterium acnes).